Consider the following 751-residue polypeptide: Centrosomal protein of 68 kDa (751 aa).

Basic and acidic residues-rich tracts occupy residues 1-17 and 86-96; these read MALG…EDTK and ASREPVAERSE. The disordered stretch occupies residues 1-253; that stretch reads MALGEEKAEA…PQPVFSGGDA (253 aa). Polar residues-rich tracts occupy residues 131 to 144 and 163 to 175; these read LPQT…TTIC and APSS…SQWK. Over residues 176 to 200 the composition is skewed to low complexity; that stretch reads SMPSPGSAAPQPSSCSVSASSTGSS. S326 carries the phosphoserine modification. The span at 339–348 shows a compositional bias: polar residues; sequence STLKSPTNVF. Disordered regions lie at residues 339-474, 511-545, and 590-611; these read STLK…ESDD, SPLE…SGDP, and RLDR…KGGE. Basic and acidic residues-rich tracts occupy residues 399–416 and 433–450; these read GSRD…RGAK and RTRD…EKRT. Positions 451–461 are enriched in polar residues; sequence SQSARRPTCTE. S466 and S472 each carry phosphoserine. Positions 520-537 are enriched in low complexity; it reads GPASLPSSSSQSQLPPGA.

Interacts with CNTLN; the interaction recruits CEP68 to the centrosome. Interacts with the SCF(FBXW11) complex which contains SKP1, CUL1 and FBXW11; the interaction is probably mediated by FBXW11 and the complex also contains CDK5RAP2 and PCNT. Also interacts with F-box protein BTRC. Interacts with serine/threonine-protein kinase PLK1; the interaction leads to phosphorylation of CEP68 and its subsequent degradation. Interacts with NEK2; the interaction leads to phosphorylation of CEP68. In terms of processing, phosphorylation by PLK1 is required for binding to BTRC in prometaphase. Phosphorylated directly or indirectly by NEK2. NEK2-mediated phosphorylation promotes CEP68 dissociation from the centrosome and its degradation at the onset of mitosis. Post-translationally, ubiquitinated and targeted for proteasomal degradation in early mitosis by the SCF(BTRC) and/or SCF(FBXW11) E3 ubiquitin-protein ligase complexes. Degradation is complete by prometaphase and is required for removal of CDK5RAP2 from the peripheral pericentriolar material and subsequent centriole separation.

It is found in the cytoplasm. It localises to the cytoskeleton. The protein localises to the microtubule organizing center. The protein resides in the centrosome. Its function is as follows. Involved in maintenance of centrosome cohesion, probably as part of a linker structure which prevents centrosome splitting. Required for localization of CDK5RAP2 to the centrosome during interphase. Contributes to CROCC/rootletin filament formation. This Pongo abelii (Sumatran orangutan) protein is Centrosomal protein of 68 kDa (CEP68).